The sequence spans 146 residues: Ataxin-7-like protein 1 (146 aa).

Disordered stretches follow at residues 1–27 (MTSERSRIPCLSAAAAEGTGKKQQEGT) and 125–146 (KRNASISWSGAESRQALEQRQV). Residues 127 to 138 (NASISWSGAESR) are compositionally biased toward polar residues.

The protein is Ataxin-7-like protein 1 (Atxn7l1) of Mus musculus (Mouse).